The chain runs to 192 residues: Leucine-rich repeat-containing protein 51 (192 aa).

LRR repeat units follow at residues 49-71, 80-101, and 103-124; these read SLTQ…NQVV, NLAW…LTTF, and NLSV…NKLA. Residues 137-175 form the LRRCT domain; that stretch reads NPIEEEKGYRQYVLCNLPRITTFDFSGVTRADRSTAEVW.

Widely expressed in adult and embryonic tissues. Expressed in the developing choroid plexus from 12.5 dpc and in the epithelium of the developing airway tract from 14.5 dpc. Also expressed in the postnatal inner ear.

Its subcellular location is the cytoplasm. The chain is Leucine-rich repeat-containing protein 51 from Mus musculus (Mouse).